A 29-amino-acid polypeptide reads, in one-letter code: U-limacoditoxin(12)-Dv72 (29 aa).

A signal peptide spans 1–15 (MNFGMLKLLTVLIIC). Residue N27 is modified to Asparagine amide.

The protein belongs to the limacoditoxin-12 family. As to expression, expressed by the venom secretory cell of the spine. The spine is a cuticular structure containing a single large nucleated venom-secreting cell at its base. It is an independent unit capable of producing, storing and injecting venom. On the back of D.vulnerans caterpillars, spines are grouped together by 50 to 100 to form scoli, of which there are eight in D.vulnerans.

The protein localises to the secreted. Probable toxin. Does not show insecticidal, antimicrobial and antiparasitic activities. Does not induce increase in intracellular calcium in mouse DRG neurons, suggesting that it does not induce pain. This is U-limacoditoxin(12)-Dv72 from Doratifera vulnerans (Mottled cup moth).